The chain runs to 457 residues: MAQRVGEEEQGASGLRRRRSGARCVEARERDEQVREVQEMLQRGLSSYEPVLSYVQAVLVWERPRHSALLHLALNAAFWFFALTSLRIIFLVAFGLMIIICADQWKNKLWPELGAARASELENESWGYVHPRLLSVPELCYHAADTWVSVYNFLRNLLLFKTENPGKFCLLACSFLTFLAVLGGYIPGVVLSYLLLLFLLLWPLAIYHQLGRRIYQKLEPALQRLDFSVRGYMMSKYKERQKHNRALPPTDASDSEEELAAFCPSLDDSAVAKELTISDSEHSDAEVSFTENGTFNLSRGQTPLTEGSEDLDRHSDPEESFARDLPDFPSINPDATGIEDDDETSIGIPSTALHPQFSSRQLYEEQESLDAELSLGGFPSTQNITENIAGFVTRGMIQLALAGASQQTHAYAESPRAKQYQRNSSSELDTDAEADDFELLDQSELSQMDPSSSHSHQ.

Residues 1–24 (MAQRVGEEEQGASGLRRRRSGARC) form a disordered region. 3 helical membrane-spanning segments follow: residues 80–100 (FFALTSLRIIFLVAFGLMIII), 165–185 (PGKFCLLACSFLTFLAVLGGY), and 186–206 (IPGVVLSYLLLLFLLLWPLAI). Residues 291 to 305 (ENGTFNLSRGQTPLT) show a composition bias toward polar residues. Disordered stretches follow at residues 291-351 (ENGT…IPST) and 410-457 (AYAE…HSHQ). The segment covering 310-326 (DLDRHSDPEESFARDLP) has biased composition (basic and acidic residues). Residues 428-441 (LDTDAEADDFELLD) show a composition bias toward acidic residues. Positions 435-440 (DDFELL) match the LIR motif motif. Polar residues predominate over residues 443 to 457 (SELSQMDPSSSHSHQ).

It belongs to the RETREG family. Interacts with ATG8 family modifier proteins.

Its subcellular location is the endoplasmic reticulum membrane. Its function is as follows. Endoplasmic reticulum (ER)-anchored autophagy regulator which exists in an inactive state under basal conditions but is activated following cellular stress. When activated, induces ER fragmentation and mediates ER delivery into lysosomes through sequestration into autophagosomes via interaction with ATG8 family proteins. Promotes ER membrane curvature and ER tubulation required for subsequent ER fragmentation and engulfment into autophagosomes. The sequence is that of Reticulophagy regulator 3 (retreg3) from Xenopus tropicalis (Western clawed frog).